Consider the following 531-residue polypeptide: Apolipoprotein N-acyltransferase (531 aa).

7 consecutive transmembrane segments (helical) span residues Ile8 to Met28, Phe34 to Val54, Trp74 to Val94, Leu105 to Ala125, Leu128 to Trp148, Val178 to Ile198, and Val206 to Leu226. The CN hydrolase domain maps to Val243 to Gly493. The active-site Proton acceptor is the Glu287. The active site involves Lys351. Residue Cys405 is the Nucleophile of the active site. A helical transmembrane segment spans residues Ser501–Ile521.

The protein belongs to the CN hydrolase family. Apolipoprotein N-acyltransferase subfamily.

It localises to the cell inner membrane. It catalyses the reaction N-terminal S-1,2-diacyl-sn-glyceryl-L-cysteinyl-[lipoprotein] + a glycerophospholipid = N-acyl-S-1,2-diacyl-sn-glyceryl-L-cysteinyl-[lipoprotein] + a 2-acyl-sn-glycero-3-phospholipid + H(+). Its pathway is protein modification; lipoprotein biosynthesis (N-acyl transfer). In terms of biological role, catalyzes the phospholipid dependent N-acylation of the N-terminal cysteine of apolipoprotein, the last step in lipoprotein maturation. The chain is Apolipoprotein N-acyltransferase from Sinorhizobium fredii (strain NBRC 101917 / NGR234).